The primary structure comprises 432 residues: Ornithine decarboxylase, chloroplastic (432 aa).

At Lys95 the chain carries N6-(pyridoxal phosphate)lysine. Pyridoxal 5'-phosphate is bound by residues Ser227, Gly265, and 298–301 (EPGR). A substrate-binding site is contributed by 341–342 (YD). Catalysis depends on Cys377, which acts as the Proton donor; shared with dimeric partner. Asp378 lines the substrate pocket. Tyr406 is a binding site for pyridoxal 5'-phosphate.

Belongs to the Orn/Lys/Arg decarboxylase class-II family. In terms of assembly, homodimer. Only the dimer is catalytically active, as the active sites are constructed of residues from both monomers. Pyridoxal 5'-phosphate serves as cofactor.

It is found in the plastid. It localises to the chloroplast. The catalysed reaction is L-lysine + H(+) = cadaverine + CO2. It carries out the reaction L-ornithine + H(+) = putrescine + CO2. It participates in alkaloid biosynthesis; nicotine biosynthesis. It functions in the pathway amine and polyamine biosynthesis; putrescine biosynthesis via L-ornithine pathway; putrescine from L-ornithine: step 1/1. With respect to regulation, repressed by alpha-difluoromethylornithine (DFMO), 5,5'-dithiobis-(2-nitrobenzoic acid) (DTNB) and salicylaldehyde. Involved in the biosynthesis of pyridine alkaloid natural products, leading mainly to the production of anabasine, anatabine, nicotine and nornicotine, effective deterrents against herbivores with antiparasitic and pesticide properties (neurotoxins); nornicotine serves as the precursor in the synthesis of the carcinogen compound N'-nitrosonornicotine (NNN). Catalyzes the first and rate-limiting step of polyamine biosynthesis that converts ornithine into putrescine, which is the precursor for the polyamines, spermidine and spermine. Can also use, with a lower efficiency, L-lysine as substrate to produce cadaverine. Polyamines are essential for cell proliferation and are implicated in cellular processes, ranging from DNA replication to apoptosis. The sequence is that of Ornithine decarboxylase, chloroplastic from Nicotiana glutinosa (Tobacco).